The following is a 36-amino-acid chain: Cecropin-D (36 aa).

K36 carries the lysine amide modification.

This sequence belongs to the cecropin family.

It is found in the secreted. Cecropins have lytic and antibacterial activity against several Gram-positive and Gram-negative bacteria. This Antheraea pernyi (Chinese oak silk moth) protein is Cecropin-D.